The chain runs to 432 residues: D-amino acid dehydrogenase (432 aa).

3–17 (VVILGSGVVGVTSAW) lines the FAD pocket.

This sequence belongs to the DadA oxidoreductase family. Requires FAD as cofactor.

It catalyses the reaction a D-alpha-amino acid + A + H2O = a 2-oxocarboxylate + AH2 + NH4(+). The protein operates within amino-acid degradation; D-alanine degradation; NH(3) and pyruvate from D-alanine: step 1/1. Oxidative deamination of D-amino acids. The polypeptide is D-amino acid dehydrogenase (Salmonella dublin (strain CT_02021853)).